The following is a 349-amino-acid chain: MKGLTLACIAATVVAASHAMTTIIAPIAEISTTSSPSTTTINPLLQSRIDFEISRLTRRLERRIRGLQVGSGRLDRSITSLQRELDFNNAVLAQLPELIKNIMINNPTQRLSSRTVASIMRSVQNAATKASNEESAEVEDRRRRAIFEVTSSIVIVEGTTDSTTTTQIPEVTTQEVDTTTEMVTTAAPEQEVTSTATETTTEMTTQGTTLPSFLVSRINSVVSRIGRFFQRRIQRIQRSLSRLSRFRPLYSRLIDENTSALNNLPLLVRGLVTSPFQRRLRLSQVFRALRFRLTITTPSQPDVSPMSVRKRRQAESAEEDDDLVGDMEDLKELEQEIQEALEEVEKLDV.

Residues Met-1–Ala-19 form the signal peptide. Asn-257 is a glycosylation site (N-linked (GlcNAc...) asparagine). A disordered region spans residues Gln-300–Asp-326. Residues Ser-316 to Asp-326 show a composition bias toward acidic residues. A coiled-coil region spans residues Ser-316–Val-349.

In terms of tissue distribution, component of the acid-insoluble and acid-soluble organic matrix of calcified layers of the shell (at protein level).

Its subcellular location is the secreted. The sequence is that of Threonine-rich protein from Lottia gigantea (Giant owl limpet).